A 146-amino-acid polypeptide reads, in one-letter code: Large ribosomal subunit protein uL15 (146 aa).

Positions 1–64 (MELNSIKPAA…MPMHRRLPKR (64 aa)) are disordered. Residues 30 to 39 (TATKGHKGQK) are compositionally biased toward basic residues.

Belongs to the universal ribosomal protein uL15 family. Part of the 50S ribosomal subunit.

In terms of biological role, binds to the 23S rRNA. This Geotalea daltonii (strain DSM 22248 / JCM 15807 / FRC-32) (Geobacter daltonii) protein is Large ribosomal subunit protein uL15.